The chain runs to 138 residues: Large ribosomal subunit protein mL43 (138 aa).

The protein belongs to the mitochondrion-specific ribosomal protein mL43 family. As to quaternary structure, component of the mitochondrial large ribosomal subunit (mt-LSU). Mature N.crassa 74S mitochondrial ribosomes consist of a small (37S) and a large (54S) subunit. The 37S small subunit contains a 16S ribosomal RNA (16S mt-rRNA) and 32 different proteins. The 54S large subunit contains a 23S rRNA (23S mt-rRNA) and 42 different proteins.

It is found in the mitochondrion. Its function is as follows. Component of the mitochondrial ribosome (mitoribosome), a dedicated translation machinery responsible for the synthesis of mitochondrial genome-encoded proteins, including at least some of the essential transmembrane subunits of the mitochondrial respiratory chain. The mitoribosomes are attached to the mitochondrial inner membrane and translation products are cotranslationally integrated into the membrane. In Neurospora crassa (strain ATCC 24698 / 74-OR23-1A / CBS 708.71 / DSM 1257 / FGSC 987), this protein is Large ribosomal subunit protein mL43 (mrpl51).